Consider the following 162-residue polypeptide: 2-amino-4-hydroxy-6-hydroxymethyldihydropteridine pyrophosphokinase (162 aa).

It belongs to the HPPK family.

It carries out the reaction 6-hydroxymethyl-7,8-dihydropterin + ATP = (7,8-dihydropterin-6-yl)methyl diphosphate + AMP + H(+). It functions in the pathway cofactor biosynthesis; tetrahydrofolate biosynthesis; 2-amino-4-hydroxy-6-hydroxymethyl-7,8-dihydropteridine diphosphate from 7,8-dihydroneopterin triphosphate: step 4/4. Functionally, catalyzes the transfer of pyrophosphate from adenosine triphosphate (ATP) to 6-hydroxymethyl-7,8-dihydropterin, an enzymatic step in folate biosynthesis pathway. The sequence is that of 2-amino-4-hydroxy-6-hydroxymethyldihydropteridine pyrophosphokinase (folK) from Pseudomonas aeruginosa (strain ATCC 15692 / DSM 22644 / CIP 104116 / JCM 14847 / LMG 12228 / 1C / PRS 101 / PAO1).